Consider the following 514-residue polypeptide: Sugar transport protein 11 (514 aa).

Residues 1–19 (MAGGAFIDESGHGGDYEGR) are Cytoplasmic-facing. Residues 20–40 (VTAFVMITCIVAAMGGLLFGY) form a helical membrane-spanning segment. Residues 41-82 (DIGISGGVISMEDFLTKFFPDVLRQMQNKRGRETEYCKYDNE) lie on the Extracellular side of the membrane. The chain crosses the membrane as a helical span at residues 83–103 (LLTLFTSSLYLAALFASFLAS). The Cytoplasmic segment spans residues 104–112 (TITRLFGRK). A helical membrane pass occupies residues 113-133 (VSMVIGSLAFLSGALLNGLAI). At 134 to 137 (NLEM) the chain is on the extracellular side. A helical membrane pass occupies residues 138–158 (LIIGRLFLGVGVGFANQSVPL). At 159 to 169 (YLSEMAPAKIR) the chain is on the cytoplasmic side. A helical transmembrane segment spans residues 170–190 (GALNIGFQLAITIGILAANIV). The Extracellular portion of the chain corresponds to 191 to 204 (NYVTPKLQNGIGWR). Residues 205–225 (LSLGLAGVPAVMMLVGCFFLP) form a helical membrane-spanning segment. The Cytoplasmic portion of the chain corresponds to 226–290 (DTPNSILERG…RYRPQLTFCT (65 aa)). Residues 291–311 (FIPFFQQLTGINVIMFYAPVL) form a helical membrane-spanning segment. The Extracellular segment spans residues 312–320 (FKTIGFGND). The chain crosses the membrane as a helical span at residues 321–341 (ASLISAVITGLVNVLSTIVSI). At 342-350 (YSVDKFGRR) the chain is on the cytoplasmic side. A helical transmembrane segment spans residues 351-371 (ALFLQGGFQMIVTQIAVGSMI). Residues 372–389 (GWKFGFNGEGNLSGVDAD) lie on the Extracellular side of the membrane. The chain crosses the membrane as a helical span at residues 390–410 (IILALICLYVAGFAWSWGPLG). The Cytoplasmic segment spans residues 411–428 (WLVPSEICPLEIRSAGQS). The chain crosses the membrane as a helical span at residues 429–449 (LNVSVNMFFTFFIGQFFLTML). Residues 450 to 453 (CHMK) lie on the Extracellular side of the membrane. Residues 454–474 (FGLFYFFAGMVLIMTIFIYFL) form a helical membrane-spanning segment. The Cytoplasmic segment spans residues 475–514 (LPETKGVPIEEMGKVWKEHRYWGKYSNNDDGDDVDDDAYF).

It belongs to the major facilitator superfamily. Sugar transporter (TC 2.A.1.1) family. As to expression, specifically expressed in germinating pollen and pollen tube (at protein level).

It localises to the cell membrane. Inhibited by uncouplers such as 2,4-dinitrophenol and carbonyl cyanide-m-chlorophenyl-hydrazone. Mediates an active uptake of hexoses, probably by sugar/hydrogen symport. Can transport glucose, galactose, mannose, xylose and 3-O-methylglucose, but not fructose and ribose. This chain is Sugar transport protein 11 (STP11), found in Arabidopsis thaliana (Mouse-ear cress).